We begin with the raw amino-acid sequence, 437 residues long: Photosystem II stability/assembly factor HCF136, chloroplastic (437 aa).

It belongs to the Ycf48 family.

It is found in the plastid. The protein localises to the chloroplast thylakoid membrane. Essential for photosystem II (PSII) biogenesis; required for assembly of an early intermediate in PSII assembly that includes D2 (psbD) and cytochrome b559. The chain is Photosystem II stability/assembly factor HCF136, chloroplastic from Cyanidioschyzon merolae (strain NIES-3377 / 10D) (Unicellular red alga).